We begin with the raw amino-acid sequence, 301 residues long: Probable alpha-L-glutamate ligase (301 aa).

Positions 104–287 constitute an ATP-grasp domain; the sequence is LQLMSRKGLG…VASMIIKHIE (184 aa). ATP is bound by residues Lys-141, 178 to 179, Asp-187, and 211 to 213; these read EY and RSN. 3 residues coordinate Mg(2+): Asp-248, Glu-260, and Asn-262. Mn(2+)-binding residues include Asp-248, Glu-260, and Asn-262.

The protein belongs to the RimK family. Mg(2+) serves as cofactor. It depends on Mn(2+) as a cofactor.

The chain is Probable alpha-L-glutamate ligase from Marinomonas sp. (strain MWYL1).